The following is a 306-amino-acid chain: Lipoyl synthase 2 (306 aa).

7 residues coordinate [4Fe-4S] cluster: C49, C54, C60, C75, C79, C82, and S300. A Radical SAM core domain is found at 61–289 (YAAGTATFLL…AEVACKLGFA (229 aa)).

It belongs to the radical SAM superfamily. Lipoyl synthase family. Requires [4Fe-4S] cluster as cofactor.

The protein localises to the cytoplasm. It catalyses the reaction [[Fe-S] cluster scaffold protein carrying a second [4Fe-4S](2+) cluster] + N(6)-octanoyl-L-lysyl-[protein] + 2 oxidized [2Fe-2S]-[ferredoxin] + 2 S-adenosyl-L-methionine + 4 H(+) = [[Fe-S] cluster scaffold protein] + N(6)-[(R)-dihydrolipoyl]-L-lysyl-[protein] + 4 Fe(3+) + 2 hydrogen sulfide + 2 5'-deoxyadenosine + 2 L-methionine + 2 reduced [2Fe-2S]-[ferredoxin]. The protein operates within protein modification; protein lipoylation via endogenous pathway; protein N(6)-(lipoyl)lysine from octanoyl-[acyl-carrier-protein]: step 2/2. In terms of biological role, catalyzes the radical-mediated insertion of two sulfur atoms into the C-6 and C-8 positions of the octanoyl moiety bound to the lipoyl domains of lipoate-dependent enzymes, thereby converting the octanoylated domains into lipoylated derivatives. This is Lipoyl synthase 2 from Prochlorococcus marinus (strain MIT 9313).